A 69-amino-acid chain; its full sequence is Lantibiotic lichenicidin A2 (69 aa).

Positions 1–37 are excised as a propeptide; the sequence is MKNSAAREAFKGANHPAGMVSEEELKALVGGNDVNPE. A 2-oxobutanoic acid modification is found at Thr-38. A (Z)-2,3-didehydrobutyrine mark is found at Thr-39, Thr-42, and Thr-43. A cross-link (lanthionine (Ser-Cys)) is located at residues 44 to 48; the sequence is SSWTC. Ser-45 carries the 2,3-didehydroalanine (Ser) modification. (Z)-2,3-didehydrobutyrine is present on residues Thr-50 and Thr-54. A cross-link (lanthionine (Ser-Cys)) is located at residues 56 to 60; sequence SASLC. 2 cross-links (beta-methyllanthionine (Thr-Cys)) span residues 62-65 and 66-69; these read TTKC and TSRC. Residue Thr-63 is modified to (Z)-2,3-didehydrobutyrine.

Maturation of lantibiotics involves the enzymatic conversion of Thr, and Ser into dehydrated AA and the formation of thioether bonds with cysteine. This is followed by membrane translocation and cleavage of the modified precursor.

It localises to the secreted. The protein resides in the cell wall. In terms of biological role, lanthionine-containing peptide antibiotic (lantibiotic) active on Gram-positive bacteria. The bactericidal activity of lantibiotics is based on depolarization of energized bacterial cytoplasmic membranes, initiated by the formation of aqueous transmembrane pores. When present individually, LchA2 exhibits activity towards L.lactis HP. When combined with LchA1, it displays activity towards a broad spectrum of non-pathogenic and pathogenic Gram-positive bacteria including strains of L.monocytogenes, methicillin-resistant S.aureus, S.pneumoniae and strains of vancomycin-resistant enterococci, but not towards E.faecium L4001 and BM4147-1. Combined LchA1 and LchA2 peptides also inhibit Bacillus sp. HIL-Y85/54728, L.lactis DPC3417 and B.halodurans C-125, which produce lantibiotics themselves. Inactivated by proteinase K and pronase E, but not by trypsin and chymotrypsin. This Bacillus licheniformis (strain ATCC 14580 / DSM 13 / JCM 2505 / CCUG 7422 / NBRC 12200 / NCIMB 9375 / NCTC 10341 / NRRL NRS-1264 / Gibson 46) protein is Lantibiotic lichenicidin A2.